A 92-amino-acid polypeptide reads, in one-letter code: Arrestin-C (92 aa).

Belongs to the arrestin family. Homodimer; disulfide-linked in response to retinal illumination. Interacts with CXCR4; the interaction is dependent on the C-terminal phosphorylation of CXCR4 and modulates the calcium ion mobilization activity of CXCR4. Interacts with GPR84. In terms of tissue distribution, retina and pineal gland.

Its subcellular location is the photoreceptor inner segment. It localises to the cell projection. The protein resides in the cilium. The protein localises to the photoreceptor outer segment. Its function is as follows. May play a role in an as yet undefined retina-specific signal transduction. Could bind to photoactivated-phosphorylated red/green opsins. This chain is Arrestin-C (Arr3), found in Rattus norvegicus (Rat).